A 479-amino-acid chain; its full sequence is UDP-glucose flavonoid 3-O-glucosyltransferase 6 (479 aa).

Histidine 17 serves as the catalytic Proton acceptor. Position 17 (histidine 17) interacts with an anthocyanidin. Aspartate 121 acts as the Charge relay in catalysis. UDP-alpha-D-glucose contacts are provided by threonine 143, alanine 354, glutamine 356, histidine 371, tryptophan 374, asparagine 375, serine 376, and glutamate 379. Alanine 394 provides a ligand contact to an anthocyanidin. 2 residues coordinate UDP-alpha-D-glucose: glutamate 395 and glutamine 396. A disordered region spans residues methionine 454–serine 479.

This sequence belongs to the UDP-glycosyltransferase family. Strongly expressed in achenes, with lower expression levels detected in receptacles.

It catalyses the reaction a flavonol + UDP-alpha-D-glucose = a flavonol 3-O-beta-D-glucoside + UDP + H(+). Functionally, broad spectrum multifunctional glucosyltransferase. Catalyzes the formation of flavonol 3-O-glucosides during fruit ripening. Accepted substrates include several flavonoids, hydroxycoumarins and beta-naphthols. Uses UDP-Glc as a sugar donor, but not UDP-Gal or UDP-GlcUA. May also be involved in detoxification of xenobiotics. In Fragaria ananassa (Strawberry), this protein is UDP-glucose flavonoid 3-O-glucosyltransferase 6.